The chain runs to 390 residues: S-adenosylmethionine synthase 3 (390 aa).

E9 serves as a coordination point for Mg(2+). H15 provides a ligand contact to ATP. K(+) is bound at residue E43. L-methionine is bound by residues E56 and Q99. ATP is bound by residues 167–169 (DGK), 235–238 (SGRF), D246, 252–253 (RK), A269, K273, and K277. D246 contributes to the L-methionine binding site. K277 contacts L-methionine.

Belongs to the AdoMet synthase family. Homotetramer. The cofactor is Mn(2+). Mg(2+) is required as a cofactor. Co(2+) serves as cofactor. It depends on K(+) as a cofactor. Requires NH4(+) as cofactor. In terms of tissue distribution, mostly expressed in roots, and, to a lower extent, in hypocotyls and cotyledons.

Its subcellular location is the cytoplasm. The enzyme catalyses L-methionine + ATP + H2O = S-adenosyl-L-methionine + phosphate + diphosphate. The protein operates within amino-acid biosynthesis; S-adenosyl-L-methionine biosynthesis; S-adenosyl-L-methionine from L-methionine: step 1/1. Inhibited by products of SAMS reaction (SAM, Pi, PPi), substrate analogs (cycloleucine and ethionine), and alternative nucleotides (GTP, CTP and ADP). Strongly repressed by PPPi. Its function is as follows. Catalyzes the formation of S-adenosylmethionine from methionine and ATP. The reaction comprises two steps that are both catalyzed by the same enzyme: formation of S-adenosylmethionine (AdoMet) and triphosphate, and subsequent hydrolysis of the triphosphate. This is S-adenosylmethionine synthase 3 (SAMS3) from Catharanthus roseus (Madagascar periwinkle).